We begin with the raw amino-acid sequence, 78 residues long: Acyl carrier protein BQ2027_MB0103 (78 aa).

The Carrier domain occupies 1–78; that stretch reads MRDRILAAVC…ELEAVCTEFG (78 aa). Ser-35 is modified (O-(pantetheine 4'-phosphoryl)serine).

The protein belongs to the acyl carrier protein (ACP) family. It depends on pantetheine 4'-phosphate as a cofactor.

It functions in the pathway lipid metabolism; fatty acid metabolism. Acyl-carrier protein (ACP) involved in the biosynthesis of a unique class of isonitrile lipopeptides (INLPs) that seem to play a role in metal acquisition. Is the dedicated ACP for the loading of activated acyl groups catalyzed by FadD10. The polypeptide is Acyl carrier protein BQ2027_MB0103 (Mycobacterium bovis (strain ATCC BAA-935 / AF2122/97)).